We begin with the raw amino-acid sequence, 443 residues long: Trigger factor (443 aa).

In terms of domain architecture, PPIase FKBP-type spans glycine 163–proline 248.

The protein belongs to the FKBP-type PPIase family. Tig subfamily.

It is found in the cytoplasm. The enzyme catalyses [protein]-peptidylproline (omega=180) = [protein]-peptidylproline (omega=0). Its function is as follows. Involved in protein export. Acts as a chaperone by maintaining the newly synthesized protein in an open conformation. Functions as a peptidyl-prolyl cis-trans isomerase. The sequence is that of Trigger factor from Agathobacter rectalis (strain ATCC 33656 / DSM 3377 / JCM 17463 / KCTC 5835 / VPI 0990) (Eubacterium rectale).